A 301-amino-acid polypeptide reads, in one-letter code: MKTKAGFVALIGKPNAGKSTLLNTLLNAHLALVSHKANATRKLMKCIVPFKDKEGYESQIIFLDTPGLHHQEKLLNQCMLSQALKAMGDAELCVFLASVHDDLKGYEEFLNLCQKPHILALSKIDTATHKQVLQKLQEYQQYASQFLSLIPLSAKKSQNLNALLECISEHLSPSAWLFEKDLMSDEKMRDIYKEIIRESLFCFLSDEIPYESDVIIDKFIEEECIDKVYAHIIVEKESQKKIVIGKNGVNIKRIGTNARLKMQEVGEKKVFLNLQVIAQKSWSKEEKSLQKLGYIYQRNRD.

Positions 4-173 constitute an Era-type G domain; the sequence is KAGFVALIGK…LECISEHLSP (170 aa). A G1 region spans residues 12-19; sequence GKPNAGKS. 12 to 19 is a GTP binding site; it reads GKPNAGKS. Residues 38–42 form a G2 region; that stretch reads NATRK. The segment at 64–67 is G3; sequence DTPG. GTP-binding positions include 64–68 and 122–125; these read DTPGL and SKID. The tract at residues 122-125 is G4; sequence SKID. Residues 152–154 form a G5 region; sequence LSA. One can recognise a KH type-2 domain in the interval 204–280; that stretch reads LSDEIPYESD…FLNLQVIAQK (77 aa).

The protein belongs to the TRAFAC class TrmE-Era-EngA-EngB-Septin-like GTPase superfamily. Era GTPase family. As to quaternary structure, monomer.

It localises to the cytoplasm. It is found in the cell inner membrane. In terms of biological role, an essential GTPase that binds both GDP and GTP, with rapid nucleotide exchange. Plays a role in 16S rRNA processing and 30S ribosomal subunit biogenesis and possibly also in cell cycle regulation and energy metabolism. This Helicobacter acinonychis (strain Sheeba) protein is GTPase Era.